We begin with the raw amino-acid sequence, 217 residues long: Small ribosomal subunit protein uS3 (217 aa).

One can recognise a KH type-2 domain in the interval 40 to 110 (IRDLINNSFN…EVYINIHEVR (71 aa)).

Belongs to the universal ribosomal protein uS3 family. Part of the 30S ribosomal subunit. Forms a tight complex with proteins S10 and S14.

Binds the lower part of the 30S subunit head. Binds mRNA in the 70S ribosome, positioning it for translation. The protein is Small ribosomal subunit protein uS3 of Rickettsia canadensis (strain McKiel).